The chain runs to 241 residues: Urease accessory protein UreF (241 aa).

This sequence belongs to the UreF family. As to quaternary structure, ureD, UreF and UreG form a complex that acts as a GTP-hydrolysis-dependent molecular chaperone, activating the urease apoprotein by helping to assemble the nickel containing metallocenter of UreC. The UreE protein probably delivers the nickel.

Its subcellular location is the cytoplasm. In terms of biological role, required for maturation of urease via the functional incorporation of the urease nickel metallocenter. This chain is Urease accessory protein UreF, found in Rhodopseudomonas palustris (strain BisB18).